The sequence spans 633 residues: Early transcription factor 70 kDa subunit (633 aa).

Positions 32-185 (RTILDHNESV…SNIISIMSDE (154 aa)) constitute a Helicase ATP-binding domain. Position 45 to 52 (45 to 52 (HIMGSGKT)) interacts with ATP. Residues 135–138 (DEAH) carry the DEXH box motif. In terms of domain architecture, Helicase C-terminal spans 326–505 (KFKYFIDTIG…TLPFDIKKLL (180 aa)).

This sequence belongs to the helicase family. VETF subfamily. Heterodimer of a 70 kDa and a 82 kDa subunit. Part of the early transcription complex composed of ETF, RAP94, and the DNA-directed RNA polymerase.

Its subcellular location is the virion. In terms of biological role, acts with RNA polymerase to initiate transcription from early gene promoters. Is recruited by the RPO-associated protein of 94 kDa (RAP94) to form the early transcription complex, which also contains the core RNA polymerase. ETF heterodimer binds to early gene promoters. The protein is Early transcription factor 70 kDa subunit (VETFS) of Vertebrata (FPV).